Reading from the N-terminus, the 421-residue chain is UDP-N-acetylglucosamine 1-carboxyvinyltransferase (421 aa).

22–23 (KN) is a binding site for phosphoenolpyruvate. A UDP-N-acetyl-alpha-D-glucosamine-binding site is contributed by arginine 92. Aspartate 116 serves as the catalytic Proton donor. Residues 121–125 (RPIDQ), aspartate 307, and isoleucine 330 each bind UDP-N-acetyl-alpha-D-glucosamine.

The protein belongs to the EPSP synthase family. MurA subfamily.

It localises to the cytoplasm. The enzyme catalyses phosphoenolpyruvate + UDP-N-acetyl-alpha-D-glucosamine = UDP-N-acetyl-3-O-(1-carboxyvinyl)-alpha-D-glucosamine + phosphate. It participates in cell wall biogenesis; peptidoglycan biosynthesis. Functionally, cell wall formation. Adds enolpyruvyl to UDP-N-acetylglucosamine. This is UDP-N-acetylglucosamine 1-carboxyvinyltransferase from Lactobacillus johnsonii (strain CNCM I-12250 / La1 / NCC 533).